Reading from the N-terminus, the 143-residue chain is uncharacterized protein (143 aa).

The tract at residues Met1–Ala143 is disordered. Composition is skewed to basic and acidic residues over residues Ile34–Asp46 and Glu61–Val76. Composition is skewed to acidic residues over residues Asp77–Glu93 and Tyr103–Ala115.

This is an uncharacterized protein from Bacillus subtilis (strain 168).